Reading from the N-terminus, the 416-residue chain is Adenylosuccinate synthetase (416 aa).

GTP-binding positions include 13-19 (GDEGKGK) and 41-43 (GHT). The Proton acceptor role is filled by aspartate 14. Mg(2+)-binding residues include aspartate 14 and glycine 41. IMP contacts are provided by residues 14–17 (DEGK), 39–42 (NAGH), threonine 126, arginine 140, glutamine 220, threonine 235, and arginine 299. The Proton donor role is filled by histidine 42. 295 to 301 (TTTGRKR) contributes to the substrate binding site. GTP contacts are provided by residues arginine 301, 327 to 329 (KLD), and 405 to 407 (STS).

It belongs to the adenylosuccinate synthetase family. In terms of assembly, homodimer. Mg(2+) is required as a cofactor.

Its subcellular location is the cytoplasm. It catalyses the reaction IMP + L-aspartate + GTP = N(6)-(1,2-dicarboxyethyl)-AMP + GDP + phosphate + 2 H(+). Its pathway is purine metabolism; AMP biosynthesis via de novo pathway; AMP from IMP: step 1/2. Plays an important role in the de novo pathway of purine nucleotide biosynthesis. Catalyzes the first committed step in the biosynthesis of AMP from IMP. In Campylobacter hominis (strain ATCC BAA-381 / DSM 21671 / CCUG 45161 / LMG 19568 / NCTC 13146 / CH001A), this protein is Adenylosuccinate synthetase.